A 93-amino-acid polypeptide reads, in one-letter code: Large ribosomal subunit protein uL23cz/uL23cy (93 aa).

It belongs to the universal ribosomal protein uL23 family. In terms of assembly, part of the 50S ribosomal subunit.

It localises to the plastid. The protein localises to the chloroplast. Functionally, binds to 23S rRNA. This chain is Large ribosomal subunit protein uL23cz/uL23cy (rpl23-A), found in Nymphaea alba (White water-lily).